The sequence spans 587 residues: Protein IQ-DOMAIN 31 (587 aa).

Positions 57–80 (ETNTVDRSGGMLETQNVGPEEISD) are disordered. At S79 the chain carries Phosphoserine. IQ domains lie at 112-140 (REIAATSVQAAFRGYLARRAFWALKGIIR), 141-163 (LQALIRGHLVRRQAVATLFSVMG), and 164-188 (IVRLQAFARGREIRKSDIGVQVYRK). The segment at 149-159 (LVRRQAVATLF) is calmodulin-binding. The Nuclear localization signal motif lies at 176–183 (IRKSDIGV). Residues 344 to 587 (NPVVESSIQP…AKTTPAERKR (244 aa)) are disordered. Composition is skewed to basic and acidic residues over residues 357 to 373 (PRKEVEKPKLGVEKTRE) and 390 to 413 (CDEKKKQEISEQPEEEVHALEMEV). The span at 424–434 (ALDSSLVNQID) shows a compositional bias: polar residues. Basic and acidic residues-rich tracts occupy residues 435–472 (SNEKAMVEEKPSMEKDTKEEKTPKPNNKENSAGKENQK) and 482–494 (KTEREESNGHHET). Polar residues-rich tracts occupy residues 495 to 506 (SPSIPSYMQATK) and 544 to 561 (RITSHSPRTTRLANSGDK).

This sequence belongs to the IQD family. In terms of assembly, binds to multiple calmodulin (CaM) in the presence of Ca(2+) and CaM-like proteins.

It is found in the nucleus. The protein resides in the nucleus envelope. Its subcellular location is the cytoplasm. It localises to the cytoskeleton. The protein localises to the cell membrane. Its function is as follows. May be involved in cooperative interactions with calmodulins or calmodulin-like proteins. Recruits calmodulin proteins to microtubules, thus being a potential scaffold in cellular signaling and trafficking. May associate with nucleic acids and regulate gene expression at the transcriptional or post-transcriptional level. The polypeptide is Protein IQ-DOMAIN 31 (Arabidopsis thaliana (Mouse-ear cress)).